The sequence spans 458 residues: KAT8 regulatory NSL complex subunit 2 (458 aa).

Residue Lys78 forms a Glycyl lysine isopeptide (Lys-Gly) (interchain with G-Cter in SUMO2) linkage. The tract at residues 126–182 (ELGSQTPESSRSEASRILDEDSWSDGDQEPITVDQTWRGDPDSEADSIDSDQEDPLK) is disordered. At Thr131 the chain carries Phosphothreonine. The span at 135–144 (SRSEASRILD) shows a compositional bias: basic and acidic residues. A phosphoserine mark is found at Ser147, Ser149, Ser168, Ser172, and Ser175. Acidic residues predominate over residues 167–178 (DSEADSIDSDQE). The required for interaction with other NSL complex members stretch occupies residues 308 to 364 (DVRCSNQSLPMTRHCLTHICQDTNQVLFKCCQGSEEVPCNKPVPVSLSEDPCCPLHF). The interval 419–458 (QMAGDGCRSQGPRNSEKAPAPLPQSGIATANGKPEPTSVS) is disordered.

In terms of assembly, component of the NSL complex at least composed of KAT8/MOF, KANSL1, KANSL2, KANSL3, MCRS1, PHF20, OGT1/OGT, WDR5 and HCFC1.

Its subcellular location is the nucleus. It is found in the mitochondrion. In terms of biological role, non-catalytic component of the NSL histone acetyltransferase complex, a multiprotein complex that mediates histone H4 acetylation at 'Lys-5'- and 'Lys-8' (H4K5ac and H4K8ac) at transcription start sites and promotes transcription initiation. Required for NSL complex stability and for transcription of intraciliary transport genes in both ciliated and non-ciliated cells by regulating histone H4 acetylation at 'Lys-5'- and 'Lys-12' (H4K5ac and H4K12ac). This is necessary for cilium assembly in ciliated cells and for organization of the microtubule cytoskeleton in non-ciliated cells. Required within the NSL complex to maintain nuclear architecture stability by promoting KAT8-mediated acetylation of lamin LMNA. This Bos taurus (Bovine) protein is KAT8 regulatory NSL complex subunit 2 (KANSL2).